Here is a 486-residue protein sequence, read N- to C-terminus: MKNLIDFGILNLSSIAPMMVLSLFAVFILVLNFINKNISRTFWTMLAILGLAINIFFLFGYSGIVRGFFDLVLIDGFAFISMIIILLFSILFLPLTLSKENFHDCSLAEFYALYLFMIVGYEFMVSSQNLIVILVGLETSSLALYTLIALHNRTRAIEAAIKYFTMGALSTGFFCFAIVIFYLSSASLDISAISYSAKNTDSILIATACIFLICSIGFKLSLIPFHTWIPDVYEGSSEVMAGYISIVPKIAGFIVAMRVFESLYDSNIAFIQISLYIIAVLTMTLANIMALIQNDVKRMLAFSSISHAGFVLCAVVIGTKSANIGLFLYWLMFSFANLGAFSVLWFTRNKQNIWHERFDHPFEKFNGLVKFLPYTSFLMALFMISLAGIPPFSVFWGKMYLMGSAISSGFIFMAVIMAINSAIAVYYYLRIIVCMFLKEPLENAEATLYKQNSSNAIKFIITFSAILCILAPFMVKFWTDFVLKFI.

A run of 14 helical transmembrane segments spans residues Ser14–Ile34, Met45–Val65, Phe77–Leu97, Cys105–Val125, Leu130–Leu150, Tyr163–Leu183, Ile203–Ile223, Ser237–Met257, Ile268–Ile288, Met299–Thr319, Leu326–Phe346, Phe377–Gly397, Gly409–Leu429, and Phe459–Thr479.

This sequence belongs to the complex I subunit 2 family. NDH-1 is composed of 14 different subunits. Subunits NuoA, H, J, K, L, M, N constitute the membrane sector of the complex.

Its subcellular location is the cell inner membrane. The catalysed reaction is a quinone + NADH + 5 H(+)(in) = a quinol + NAD(+) + 4 H(+)(out). Its function is as follows. NDH-1 shuttles electrons from NADH, via FMN and iron-sulfur (Fe-S) centers, to quinones in the respiratory chain. The immediate electron acceptor for the enzyme in this species is believed to be ubiquinone. Couples the redox reaction to proton translocation (for every two electrons transferred, four hydrogen ions are translocated across the cytoplasmic membrane), and thus conserves the redox energy in a proton gradient. This is NADH-quinone oxidoreductase subunit N from Campylobacter hominis (strain ATCC BAA-381 / DSM 21671 / CCUG 45161 / LMG 19568 / NCTC 13146 / CH001A).